The sequence spans 282 residues: NADH-ubiquinone oxidoreductase chain 2 (282 aa).

7 consecutive transmembrane segments (helical) span residues 17-37, 58-78, 87-107, 115-135, 166-186, 202-222, and 232-252; these read ILTNNVIVWWSIFLLMTVVFI, SLGLLFLLCSGGLLQFFIILL, FWIFNVTNNIFNYGLMWFLTF, ILLQIFWLSSVYILLFGLLIC, FSMFNTFYLFIYYFVLMVLLI, TTLVFLNIPFSVSFFVKIFSL, and FTLFLLFTMFLSVLAFSFWLI.

It belongs to the complex I subunit 2 family.

It localises to the mitochondrion inner membrane. It catalyses the reaction a ubiquinone + NADH + 5 H(+)(in) = a ubiquinol + NAD(+) + 4 H(+)(out). Core subunit of the mitochondrial membrane respiratory chain NADH dehydrogenase (Complex I) that is believed to belong to the minimal assembly required for catalysis. Complex I functions in the transfer of electrons from NADH to the respiratory chain. The immediate electron acceptor for the enzyme is believed to be ubiquinone. This chain is NADH-ubiquinone oxidoreductase chain 2, found in Caenorhabditis elegans.